The following is a 384-amino-acid chain: tRNA-specific 2-thiouridylase MnmA (384 aa).

ATP contacts are provided by residues 9 to 16 (GMSGGVDS) and Met35. The tract at residues 95–97 (NPD) is interaction with target base in tRNA. Catalysis depends on Cys100, which acts as the Nucleophile. An intrachain disulfide couples Cys100 to Cys196. Position 124 (Gly124) interacts with ATP. Positions 146-148 (KDQ) are interaction with tRNA. Residue Cys196 is the Cysteine persulfide intermediate of the active site. Residues 308-309 (RY) form an interaction with tRNA region.

Belongs to the MnmA/TRMU family.

The protein localises to the cytoplasm. The catalysed reaction is S-sulfanyl-L-cysteinyl-[protein] + uridine(34) in tRNA + AH2 + ATP = 2-thiouridine(34) in tRNA + L-cysteinyl-[protein] + A + AMP + diphosphate + H(+). Functionally, catalyzes the 2-thiolation of uridine at the wobble position (U34) of tRNA, leading to the formation of s(2)U34. This Burkholderia vietnamiensis (strain G4 / LMG 22486) (Burkholderia cepacia (strain R1808)) protein is tRNA-specific 2-thiouridylase MnmA.